Here is a 263-residue protein sequence, read N- to C-terminus: Isatin hydrolase (263 aa).

62–66 (FFAWN) contributes to the substrate binding site. Positions 73, 77, and 79 each coordinate Mn(2+). Catalysis depends on histidine 83, which acts as the Proton donor/acceptor. Histidine 212 contacts substrate.

Belongs to the Cyclase 1 superfamily. As to quaternary structure, homodimer. It depends on Mn(2+) as a cofactor.

The catalysed reaction is isatin + H2O = isatinate + H(+). With respect to regulation, inhibited by thioisatinate. Its function is as follows. Involved in the degradation of the plant hormone indole-3-acetic acid (IAA). Catalyzes the hydrolysis of the cyclic amide bond (lactam) of isatin (1H-indole-2,3-dione) to yield isatinate (2-(2-aminophenyl)-2-oxoacetate). This chain is Isatin hydrolase, found in Roseibium aggregatum (strain ATCC 25650 / DSM 13394 / JCM 20685 / NBRC 16684 / NCIMB 2208 / IAM 12614 / B1) (Stappia aggregata).